The chain runs to 258 residues: Ubiquinone/menaquinone biosynthesis C-methyltransferase UbiE (258 aa).

Residues Thr-81, Asp-102, and 130–131 (NA) each bind S-adenosyl-L-methionine.

The protein belongs to the class I-like SAM-binding methyltransferase superfamily. MenG/UbiE family.

It catalyses the reaction a 2-demethylmenaquinol + S-adenosyl-L-methionine = a menaquinol + S-adenosyl-L-homocysteine + H(+). The enzyme catalyses a 2-methoxy-6-(all-trans-polyprenyl)benzene-1,4-diol + S-adenosyl-L-methionine = a 5-methoxy-2-methyl-3-(all-trans-polyprenyl)benzene-1,4-diol + S-adenosyl-L-homocysteine + H(+). It functions in the pathway quinol/quinone metabolism; menaquinone biosynthesis; menaquinol from 1,4-dihydroxy-2-naphthoate: step 2/2. The protein operates within cofactor biosynthesis; ubiquinone biosynthesis. Functionally, methyltransferase required for the conversion of demethylmenaquinol (DMKH2) to menaquinol (MKH2) and the conversion of 2-polyprenyl-6-methoxy-1,4-benzoquinol (DDMQH2) to 2-polyprenyl-3-methyl-6-methoxy-1,4-benzoquinol (DMQH2). The chain is Ubiquinone/menaquinone biosynthesis C-methyltransferase UbiE from Sinorhizobium fredii (strain NBRC 101917 / NGR234).